Consider the following 540-residue polypeptide: T-complex protein 1 subunit delta (540 aa).

A compositionally biased stretch (low complexity) spans 1-12 (MPPAVPAAAATA). The interval 1-32 (MPPAVPAAAATARQSASGRERNFKDKDKPESV) is disordered. The span at 18-31 (GRERNFKDKDKPES) shows a compositional bias: basic and acidic residues.

The protein belongs to the TCP-1 chaperonin family. In terms of assembly, heterooligomeric complex of about 850 to 900 kDa that forms two stacked rings, 12 to 16 nm in diameter.

It is found in the cytoplasm. Molecular chaperone; assists the folding of proteins upon ATP hydrolysis. Known to play a role, in vitro, in the folding of actin and tubulin. In Caenorhabditis elegans, this protein is T-complex protein 1 subunit delta (cct-4).